The sequence spans 93 residues: Small ribosomal subunit protein uS19 (93 aa).

This sequence belongs to the universal ribosomal protein uS19 family.

Functionally, protein S19 forms a complex with S13 that binds strongly to the 16S ribosomal RNA. The polypeptide is Small ribosomal subunit protein uS19 (Maridesulfovibrio salexigens (strain ATCC 14822 / DSM 2638 / NCIMB 8403 / VKM B-1763) (Desulfovibrio salexigens)).